A 456-amino-acid chain; its full sequence is Dolichyl-diphosphooligosaccharide--protein glycosyltransferase 48 kDa subunit (456 aa).

Positions 1 to 42 are cleaved as a signal peptide; it reads MGYFRCARAGSFGRRRKMEPSTAARAWALFWLLLPLLGAVCA. Residues 43–427 are Lumenal-facing; it reads SGPRTLVLLD…YERFIPSAYP (385 aa). The chain crosses the membrane as a helical span at residues 428 to 447; it reads YYASAFSMMLGLFIFSIVFL. Topologically, residues 448-456 are cytoplasmic; the sequence is HMKEKEKSD.

Belongs to the DDOST 48 kDa subunit family. Component of the oligosaccharyltransferase (OST) complex. OST exists in two different complex forms which contain common core subunits RPN1, RPN2, OST48, OST4, DAD1 and TMEM258, either STT3A or STT3B as catalytic subunits, and form-specific accessory subunits. STT3A complex assembly occurs through the formation of 3 subcomplexes. Subcomplex 1 contains RPN1 and TMEM258, subcomplex 2 contains the STT3A-specific subunits STT3A, DC2/OSTC, and KCP2 as well as the core subunit OST4, and subcomplex 3 contains RPN2, DAD1, and OST48. The STT3A complex can form stable complexes with the Sec61 complex or with both the Sec61 and TRAP complexes. Interacts with SMIM22.

Its subcellular location is the endoplasmic reticulum membrane. Its pathway is protein modification; protein glycosylation. Subunit of the oligosaccharyl transferase (OST) complex that catalyzes the initial transfer of a defined glycan (Glc(3)Man(9)GlcNAc(2) in eukaryotes) from the lipid carrier dolichol-pyrophosphate to an asparagine residue within an Asn-X-Ser/Thr consensus motif in nascent polypeptide chains, the first step in protein N-glycosylation. N-glycosylation occurs cotranslationally and the complex associates with the Sec61 complex at the channel-forming translocon complex that mediates protein translocation across the endoplasmic reticulum (ER). All subunits are required for a maximal enzyme activity. Required for the assembly of both SST3A- and SS3B-containing OST complexes. The protein is Dolichyl-diphosphooligosaccharide--protein glycosyltransferase 48 kDa subunit of Homo sapiens (Human).